Here is a 122-residue protein sequence, read N- to C-terminus: Basic phospholipase A2 homolog Gln49-PLA2 (122 aa).

Cystine bridges form between cysteine 26–cysteine 115, cysteine 28–cysteine 44, cysteine 43–cysteine 95, cysteine 49–cysteine 122, cysteine 50–cysteine 88, cysteine 57–cysteine 81, and cysteine 75–cysteine 86.

This sequence belongs to the phospholipase A2 family. Group II subfamily. Q49 sub-subfamily. As to quaternary structure, monomer. In terms of tissue distribution, expressed by the venom gland.

The protein localises to the secreted. Its function is as follows. Snake venom phospholipase A2 (PLA2) homolog that shows local myotoxicity, apparent anticoagulant activity, and neurotoxicity. Shows analgesic effect on mice due to a decrease of action potentials and nerve conduction velocity. These effects are caused by inhibition of voltage-gated ion channels (potassium (Kv) and sodium (Nav)). In addition, analgesic effects are antagonized by naloxone, implying the mechanism of action is correlated with opioid receptors (probably indirectly). Does not show detectable PLA2 activity on egg yolk phospholipids. The sequence is that of Basic phospholipase A2 homolog Gln49-PLA2 from Gloydius ussuriensis (Ussuri mamushi).